The primary structure comprises 205 residues: Putative lipoprotein LppC (205 aa).

Positions 1–27 (MESPMTSTLHRTPLATAGLALVVALGG) are cleaved as a signal peptide. The N-palmitoyl cysteine moiety is linked to residue Cys28. Cys28 is lipidated: S-diacylglycerol cysteine. Positions 126–145 (GSTADGQTPAGGHSVPNSGG) are disordered.

It belongs to the UPF0098 family.

The protein localises to the cell membrane. In Mycobacterium tuberculosis (strain CDC 1551 / Oshkosh), this protein is Putative lipoprotein LppC (lppC).